The following is a 402-amino-acid chain: Phosphoglycerate kinase (402 aa).

Substrate-binding positions include 24-26, Arg40, 63-66, Arg122, and Arg155; these read DFN and HFGR. ATP contacts are provided by residues Lys206, Gly297, Glu328, and 357-360; that span reads GGDS.

Belongs to the phosphoglycerate kinase family. Monomer.

Its subcellular location is the cytoplasm. It catalyses the reaction (2R)-3-phosphoglycerate + ATP = (2R)-3-phospho-glyceroyl phosphate + ADP. It functions in the pathway carbohydrate degradation; glycolysis; pyruvate from D-glyceraldehyde 3-phosphate: step 2/5. This chain is Phosphoglycerate kinase, found in Synechococcus sp. (strain WH7803).